A 278-amino-acid chain; its full sequence is Inner membrane mitoribosome receptor MBA1, mitochondrial (278 aa).

The N-terminal 33 residues, 1-33 (MSVLRSTCLFFPPRSLLISFNKRRLFSTSRLIL), are a transit peptide targeting the mitochondrion.

Interacts with OXA1 and MDM38. Binds to mitoribosomes in order to recruit them to the mitochondrial inner membrane.

The protein localises to the mitochondrion inner membrane. In terms of biological role, mitochondrial inner membrane-associated mitoribosome receptor that spatially aligns the mitoribosome exit tunnel with the membrane insertion machinery and allows cotranslational protein membrane insertion. In Saccharomyces cerevisiae (strain ATCC 204508 / S288c) (Baker's yeast), this protein is Inner membrane mitoribosome receptor MBA1, mitochondrial.